The primary structure comprises 322 residues: Beta-carotene 3-hydroxylase, chloroplastic (322 aa).

Residues 1 to 68 (TFHKPVSGAS…AQRCSLVRLR (68 aa)) constitute a chloroplast transit peptide. 2 consecutive transmembrane segments (helical) span residues 118–138 (QAAA…ATYL) and 149–169 (AVPW…ALGM). The region spanning 164–286 (GGALGMEMYA…AHQLHHSGKY (123 aa)) is the Fatty acid hydroxylase domain. The short motif at 177–182 (HKAIWH) is the Histidine box-1 element. A Histidine box-2 motif is present at residues 191-195 (HKSHH). Helical transmembrane passes span 207–227 (LFAI…FWLP) and 231–251 (GAAC…YMFV). Residues 252 to 257 (HDGLVH) carry the Histidine box-3 motif. Residues 278–282 (HQLHH) carry the Histidine box-4 motif.

This sequence belongs to the sterol desaturase family.

It is found in the plastid. It localises to the chloroplast membrane. It carries out the reaction all-trans-beta-carotene + 4 reduced [2Fe-2S]-[ferredoxin] + 2 O2 + 4 H(+) = all-trans-zeaxanthin + 4 oxidized [2Fe-2S]-[ferredoxin] + 2 H2O. Its function is as follows. Nonheme diiron monooxygenase involved in the biosynthesis of astaxanthin. Hydroxylates beta-ring of beta-carotene and catalyzes the conversion of canthaxanthin to astaxanthin. Uses ferredoxin as an electron donor. The sequence is that of Beta-carotene 3-hydroxylase, chloroplastic (CRTZ) from Haematococcus lacustris (Green alga).